The chain runs to 417 residues: Pre-mRNA-splicing factor PRP46 (417 aa).

WD repeat units follow at residues 119–159 (AHQG…LKAT), 162–201 (GHIM…SSSG), 209–248 (GHVG…EIMV), 251–290 (GHRS…TQLA), 293–334 (HHSK…NEFG), 337–376 (GENK…LLQS), and 385–417 (STES…WGEE).

The protein belongs to the WD repeat PRL1/PRL2 family. As to quaternary structure, associated with the spliceosome.

It is found in the cytoplasm. The protein localises to the nucleus. Functionally, involved in pre-mRNA splicing and required for cell cycle progression at G2/M. The polypeptide is Pre-mRNA-splicing factor PRP46 (PRP46) (Debaryomyces hansenii (strain ATCC 36239 / CBS 767 / BCRC 21394 / JCM 1990 / NBRC 0083 / IGC 2968) (Yeast)).